We begin with the raw amino-acid sequence, 337 residues long: tRNA N6-adenosine threonylcarbamoyltransferase (337 aa).

Fe cation is bound by residues His-111 and His-115. Substrate is bound by residues Leu-134–Gly-138, Asp-167, Gly-180, and Asn-272. Residue Asp-300 coordinates Fe cation.

The protein belongs to the KAE1 / TsaD family. It depends on Fe(2+) as a cofactor.

It localises to the cytoplasm. It carries out the reaction L-threonylcarbamoyladenylate + adenosine(37) in tRNA = N(6)-L-threonylcarbamoyladenosine(37) in tRNA + AMP + H(+). Functionally, required for the formation of a threonylcarbamoyl group on adenosine at position 37 (t(6)A37) in tRNAs that read codons beginning with adenine. Is involved in the transfer of the threonylcarbamoyl moiety of threonylcarbamoyl-AMP (TC-AMP) to the N6 group of A37, together with TsaE and TsaB. TsaD likely plays a direct catalytic role in this reaction. The chain is tRNA N6-adenosine threonylcarbamoyltransferase from Cronobacter sakazakii (strain ATCC BAA-894) (Enterobacter sakazakii).